The following is a 184-amino-acid chain: ATP synthase subunit b, chloroplastic (184 aa).

The chain crosses the membrane as a helical span at residues 27-49 (LATNLINLSVVLGVLIFFGKGVL).

The protein belongs to the ATPase B chain family. F-type ATPases have 2 components, F(1) - the catalytic core - and F(0) - the membrane proton channel. F(1) has five subunits: alpha(3), beta(3), gamma(1), delta(1), epsilon(1). F(0) has four main subunits: a(1), b(1), b'(1) and c(10-14). The alpha and beta chains form an alternating ring which encloses part of the gamma chain. F(1) is attached to F(0) by a central stalk formed by the gamma and epsilon chains, while a peripheral stalk is formed by the delta, b and b' chains.

It is found in the plastid. The protein localises to the chloroplast thylakoid membrane. In terms of biological role, f(1)F(0) ATP synthase produces ATP from ADP in the presence of a proton or sodium gradient. F-type ATPases consist of two structural domains, F(1) containing the extramembraneous catalytic core and F(0) containing the membrane proton channel, linked together by a central stalk and a peripheral stalk. During catalysis, ATP synthesis in the catalytic domain of F(1) is coupled via a rotary mechanism of the central stalk subunits to proton translocation. Component of the F(0) channel, it forms part of the peripheral stalk, linking F(1) to F(0). The chain is ATP synthase subunit b, chloroplastic from Liriodendron tulipifera (Tuliptree).